A 229-amino-acid polypeptide reads, in one-letter code: Ras-related protein rab-39 (229 aa).

GTP is bound at residue 73 to 77 (DTAGQ). Residues Cys227 and Cys229 are each lipidated (S-geranylgeranyl cysteine). Position 229 is a cysteine methyl ester (Cys229).

It belongs to the small GTPase superfamily. Rab family. Interacts (in GTP-bound form) with Ras association domain-containing protein rsf-1.

The protein localises to the cell membrane. It localises to the cytoplasmic vesicle membrane. The protein resides in the golgi apparatus. Its function is as follows. Small GTPases Rab involved in autophagy. The small GTPases Rab are key regulators of intracellular membrane trafficking, from the formation of transport vesicles to their fusion with membranes. Rabs cycle between an inactive GDP-bound form and an active GTP-bound form that is able to recruit to membranes different sets of downstream effectors directly responsible for vesicle formation, movement, tethering and fusion. Involved in positively regulating the oxidative stress response, perhaps in concert with the Ras association domain-containing protein rsf-1. The protein is Ras-related protein rab-39 of Caenorhabditis elegans.